Consider the following 158-residue polypeptide: Large ribosomal subunit protein uL11 (158 aa).

It belongs to the universal ribosomal protein uL11 family. Part of the ribosomal stalk of the 50S ribosomal subunit. Interacts with L10 and the large rRNA to form the base of the stalk. L10 forms an elongated spine to which L12 dimers bind in a sequential fashion forming a multimeric L10(L12)X complex.

In terms of biological role, forms part of the ribosomal stalk which helps the ribosome interact with GTP-bound translation factors. The protein is Large ribosomal subunit protein uL11 of Methanoculleus marisnigri (strain ATCC 35101 / DSM 1498 / JR1).